Consider the following 332-residue polypeptide: Probable electron transfer flavoprotein subunit alpha, mitochondrial (332 aa).

275–303 (LYIAIGISGAIQHLAGMKDSKVIVAINKD) is an FAD binding site.

Belongs to the ETF alpha-subunit/FixB family. Heterodimer of an alpha and a beta subunit. FAD is required as a cofactor.

The protein resides in the mitochondrion matrix. Functionally, the electron transfer flavoprotein serves as a specific electron acceptor for several dehydrogenases, including five acyl-CoA dehydrogenases, glutaryl-CoA and sarcosine dehydrogenase. It transfers the electrons to the main mitochondrial respiratory chain via ETF-ubiquinone oxidoreductase (ETF dehydrogenase). The chain is Probable electron transfer flavoprotein subunit alpha, mitochondrial from Caenorhabditis elegans.